We begin with the raw amino-acid sequence, 303 residues long: Cilia- and flagella-associated protein 161 (303 aa).

In terms of assembly, microtubule inner protein component of sperm flagellar doublet microtubules.

It is found in the cytoplasm. It localises to the cytoskeleton. Its subcellular location is the cilium axoneme. The protein localises to the flagellum axoneme. In terms of biological role, microtubule inner protein (MIP) part of the dynein-decorated doublet microtubules (DMTs) in cilia axoneme, which is required for motile cilia beating. In Mus musculus (Mouse), this protein is Cilia- and flagella-associated protein 161.